The following is a 278-amino-acid chain: Large ribosomal subunit protein uL2 (278 aa).

Residues 218–278 (RPHNRGVVMN…IMRSRHQRKK (61 aa)) are disordered.

Belongs to the universal ribosomal protein uL2 family. As to quaternary structure, part of the 50S ribosomal subunit. Forms a bridge to the 30S subunit in the 70S ribosome.

Its function is as follows. One of the primary rRNA binding proteins. Required for association of the 30S and 50S subunits to form the 70S ribosome, for tRNA binding and peptide bond formation. It has been suggested to have peptidyltransferase activity; this is somewhat controversial. Makes several contacts with the 16S rRNA in the 70S ribosome. The protein is Large ribosomal subunit protein uL2 of Rhizobium etli (strain CIAT 652).